The chain runs to 434 residues: Tol-Pal system protein TolB (434 aa).

The signal sequence occupies residues 1–24 (MKFSAYLTTLFIVLFSLFIQTVQA).

This sequence belongs to the TolB family. As to quaternary structure, the Tol-Pal system is composed of five core proteins: the inner membrane proteins TolA, TolQ and TolR, the periplasmic protein TolB and the outer membrane protein Pal. They form a network linking the inner and outer membranes and the peptidoglycan layer.

The protein localises to the periplasm. Part of the Tol-Pal system, which plays a role in outer membrane invagination during cell division and is important for maintaining outer membrane integrity. The chain is Tol-Pal system protein TolB from Histophilus somni (strain 129Pt) (Haemophilus somnus).